Here is a 327-residue protein sequence, read N- to C-terminus: Glycerol-3-phosphate dehydrogenase [NAD(P)+] (327 aa).

NADPH contacts are provided by Trp-11, His-30, and Lys-103. Lys-103, Gly-131, and Ser-133 together coordinate sn-glycerol 3-phosphate. Ala-135 is an NADPH binding site. Lys-186, Asp-243, Ser-253, Arg-254, and Asn-255 together coordinate sn-glycerol 3-phosphate. Lys-186 serves as the catalytic Proton acceptor. An NADPH-binding site is contributed by Arg-254. 2 residues coordinate NADPH: Val-281 and Glu-283.

It belongs to the NAD-dependent glycerol-3-phosphate dehydrogenase family.

The protein localises to the cytoplasm. The enzyme catalyses sn-glycerol 3-phosphate + NAD(+) = dihydroxyacetone phosphate + NADH + H(+). The catalysed reaction is sn-glycerol 3-phosphate + NADP(+) = dihydroxyacetone phosphate + NADPH + H(+). The protein operates within membrane lipid metabolism; glycerophospholipid metabolism. Its function is as follows. Catalyzes the reduction of the glycolytic intermediate dihydroxyacetone phosphate (DHAP) to sn-glycerol 3-phosphate (G3P), the key precursor for phospholipid synthesis. The polypeptide is Glycerol-3-phosphate dehydrogenase [NAD(P)+] (Wolbachia pipientis wMel).